A 365-amino-acid polypeptide reads, in one-letter code: MASTESSLLRSLGLSPGPGSSEVELDCWFDEDFKFILLPVSYAVVFVLGLGLNAPTLWLFIFRLRPWDATATYMFHLALSDTLYVLSLPTLIYYYAAHNHWPFGTEICKFVRFLFYWNLYCSVLFLTCISVHRYLGICHPLRALRWGRPRLAGLLCLAVWLVVAGCLVPNLFFVTTSNKGTTVLCHDTTRPEEFDHYVHFSSAVMGLLFGVPCLVTLVCYGLMARRLYQPLPGSAQSSSRLRSLRTIAVVLTVFAVCFVPFHITRTIYYLARLLEADCRVLNIVNVVYKVTRPLASANSCLDPVLYLLTGDKYRRQLRQLCGGGKPQPRTAASSLALVSLPEDSSCRWAATPQDSSCSTPRADRL.

Residues 1-34 are Extracellular-facing; that stretch reads MASTESSLLRSLGLSPGPGSSEVELDCWFDEDFK. Residues 35–61 traverse the membrane as a helical segment; it reads FILLPVSYAVVFVLGLGLNAPTLWLFI. Over 62–72 the chain is Cytoplasmic; sequence FRLRPWDATAT. The helical transmembrane segment at 73 to 95 threads the bilayer; that stretch reads YMFHLALSDTLYVLSLPTLIYYY. The Extracellular portion of the chain corresponds to 96-112; the sequence is AAHNHWPFGTEICKFVR. Cysteines 108 and 185 form a disulfide. Residues 113 to 131 traverse the membrane as a helical segment; that stretch reads FLFYWNLYCSVLFLTCISV. Residues 132-154 are Cytoplasmic-facing; sequence HRYLGICHPLRALRWGRPRLAGL. A helical membrane pass occupies residues 155–174; it reads LCLAVWLVVAGCLVPNLFFV. The Extracellular segment spans residues 175–196; the sequence is TTSNKGTTVLCHDTTRPEEFDH. Residues 197–222 form a helical membrane-spanning segment; it reads YVHFSSAVMGLLFGVPCLVTLVCYGL. Topologically, residues 223 to 246 are cytoplasmic; that stretch reads MARRLYQPLPGSAQSSSRLRSLRT. The helical transmembrane segment at 247 to 269 threads the bilayer; that stretch reads IAVVLTVFAVCFVPFHITRTIYY. At 270–287 the chain is on the extracellular side; sequence LARLLEADCRVLNIVNVV. A helical membrane pass occupies residues 288 to 309; it reads YKVTRPLASANSCLDPVLYLLT. The Cytoplasmic segment spans residues 310–365; sequence GDKYRRQLRQLCGGGKPQPRTAASSLALVSLPEDSSCRWAATPQDSSCSTPRADRL. A phosphoserine mark is found at S333 and S334.

It belongs to the G-protein coupled receptor 1 family. Post-translationally, phosphorylation of Ser-333 and Ser-334 is a key step in agonist-dependent desensitization and loss of surface P2RY4. This phosphorylation does not involve PKC, nor other calcium activated kinases. As to expression, pancreas.

The protein resides in the cell membrane. Functionally, receptor for UTP and UDP coupled to G-proteins that activate a phosphatidylinositol-calcium second messenger system. Not activated by ATP or ADP. The chain is P2Y purinoceptor 4 (P2RY4) from Homo sapiens (Human).